Reading from the N-terminus, the 341-residue chain is Probable galacturonosyltransferase-like 2 (341 aa).

Topologically, residues 1–4 are cytoplasmic; sequence MHSK. A helical; Signal-anchor for type II membrane protein membrane pass occupies residues 5-22; the sequence is FILYLSILAVFTVSFAGG. At 23–341 the chain is on the lumenal side; sequence ERFKEAPKFF…LESRFDLIES (319 aa). An N-linked (GlcNAc...) asparagine glycan is attached at N190.

It belongs to the glycosyltransferase 8 family.

It is found in the golgi apparatus membrane. Its pathway is glycan metabolism; pectin biosynthesis. Its function is as follows. May be involved in pectin and/or xylans biosynthesis in cell walls. The sequence is that of Probable galacturonosyltransferase-like 2 (GATL2) from Arabidopsis thaliana (Mouse-ear cress).